Consider the following 499-residue polypeptide: Glycerol kinase (499 aa).

Thr-12 contributes to the ADP binding site. The ATP site is built by Thr-12, Thr-13, and Ser-14. A sn-glycerol 3-phosphate-binding site is contributed by Thr-12. Arg-16 contacts ADP. Sn-glycerol 3-phosphate-binding residues include Arg-82, Glu-83, and Tyr-134. Residues Arg-82, Glu-83, and Tyr-134 each contribute to the glycerol site. His-230 bears the Phosphohistidine; by HPr mark. Asp-244 is a binding site for sn-glycerol 3-phosphate. Asp-244 and Gln-245 together coordinate glycerol. ADP is bound by residues Thr-266 and Gly-309. ATP contacts are provided by Thr-266, Gly-309, Gln-313, and Gly-410. The ADP site is built by Gly-410 and Asn-414.

Belongs to the FGGY kinase family. Homotetramer and homodimer (in equilibrium). The phosphoenolpyruvate-dependent sugar phosphotransferase system (PTS), including enzyme I, and histidine-containing protein (HPr) are required for the phosphorylation, which leads to the activation of the enzyme.

The catalysed reaction is glycerol + ATP = sn-glycerol 3-phosphate + ADP + H(+). It participates in polyol metabolism; glycerol degradation via glycerol kinase pathway; sn-glycerol 3-phosphate from glycerol: step 1/1. Activated by phosphorylation and inhibited by fructose 1,6-bisphosphate (FBP). Its function is as follows. Key enzyme in the regulation of glycerol uptake and metabolism. Catalyzes the phosphorylation of glycerol to yield sn-glycerol 3-phosphate. The chain is Glycerol kinase from Staphylococcus epidermidis (strain ATCC 12228 / FDA PCI 1200).